Here is a 262-residue protein sequence, read N- to C-terminus: Putative glycyl-radical enzyme activating enzyme HI_0520 (262 aa).

The 243-residue stretch at 20 to 262 (VEGQGNRSSI…CGINKILTIL (243 aa)) folds into the Radical SAM core domain. Residues cysteine 34, cysteine 38, and cysteine 41 each coordinate [4Fe-4S] cluster. S-adenosyl-L-methionine is bound by residues 40 to 42 (YCH), glycine 81, and 130 to 132 (DLK).

Belongs to the organic radical-activating enzymes family. [4Fe-4S] cluster is required as a cofactor.

It carries out the reaction glycyl-[protein] + reduced [flavodoxin] + S-adenosyl-L-methionine = glycin-2-yl radical-[protein] + semiquinone [flavodoxin] + 5'-deoxyadenosine + L-methionine + H(+). In Haemophilus influenzae (strain ATCC 51907 / DSM 11121 / KW20 / Rd), this protein is Putative glycyl-radical enzyme activating enzyme HI_0520.